The chain runs to 238 residues: CD63 antigen (238 aa).

Over 1-11 (MAVEGGMKCVK) the chain is Cytoplasmic. A helical membrane pass occupies residues 12 to 32 (FLLYVLLLAFCACAVGLIAIG). Residues 33 to 51 (VAVQVVLKQAITHETTAGS) lie on the Extracellular side of the membrane. The chain crosses the membrane as a helical span at residues 52-72 (LLPVVIIAVGAFLFLVAFVGC). The Cytoplasmic portion of the chain corresponds to 73-81 (CGACKENYC). The chain crosses the membrane as a helical span at residues 82 to 102 (LMITFAIFLSLIMLVEVAVAI). Residues 103–203 (AGYVFRDQVK…TIAIWLRKNI (101 aa)) are Extracellular-facing. 4 N-linked (GlcNAc...) asparagine glycosylation sites follow: N116, N130, N150, and N172. A helical transmembrane segment spans residues 204 to 224 (LLVAAAALGIAFVEVLGIIFS). Topologically, residues 225-238 (CCLVKSIRSGYEVM) are cytoplasmic. A Lysosomal targeting motif motif is present at residues 234–238 (GYEVM).

This sequence belongs to the tetraspanin (TM4SF) family. In terms of assembly, interacts with TIMP1 and ITGB1 and recruits TIMP1 to ITGB1. Interacts with CD9. Identified in a complex with CD9 and ITGB3. Interacts with PMEL. Interacts with KDR/VEGFR2; identified in a complex with ITGB1 and KDR/VEGFR2 and is required to recruit KDR to ITGB1 complexes. Interacts with SYT7. In terms of processing, palmitoylated at a low, basal level in unstimulated platelets. The level of palmitoylation increases when platelets are activated by thrombin (in vitro). Ubiquitous. Strongly expressed in kidney. Detected in spleen, bone marrow, peripheral blood mononuclear cells and macrophages.

It localises to the cell membrane. The protein resides in the lysosome membrane. Its subcellular location is the late endosome membrane. The protein localises to the endosome. It is found in the multivesicular body. It localises to the melanosome. The protein resides in the secreted. Its subcellular location is the extracellular exosome. The protein localises to the cell surface. Its function is as follows. Functions as a cell surface receptor for TIMP1 and plays a role in the activation of cellular signaling cascades. Plays a role in the activation of ITGB1 and integrin signaling, leading to the activation of AKT, FAK/PTK2 and MAP kinases. Promotes cell survival, reorganization of the actin cytoskeleton, cell adhesion, spreading and migration, via its role in the activation of AKT and FAK/PTK2. Plays a role in VEGFA signaling via its role in regulating the internalization of KDR/VEGFR2. Plays a role in intracellular vesicular transport processes, and is required for normal trafficking of the PMEL luminal domain that is essential for the development and maturation of melanocytes. Plays a role in the adhesion of leukocytes onto endothelial cells via its role in the regulation of SELP trafficking. May play a role in mast cell degranulation in response to Ms4a2/FceRI stimulation, but not in mast cell degranulation in response to other stimuli. This is CD63 antigen (Cd63) from Mus musculus (Mouse).